Consider the following 415-residue polypeptide: MSGLQPPRGTHDLIGETMRRHHHVVETARRVLRTYGFEEWSTPIFEDTRVFSRTLGETSDVVSKEMYTFEDRGGESITLRPEGTAAICRALVTNGLTQSLPQKVFYHGSMFRYERPQKGRYRQFHQIGAELIGAESPLRDAETIAMAQDILRELGLGDHVTLELNTLGDLASRQAWREALVAYFRDHADALSEESRVRLEANPLRILDSKSEQDRKLLDAAPAFADYLNDDSRQFWDGLRSSLQAFGVDFVENPRIVRGLDYYSHTAFEFVTSKLGAQGTVLAGGRYEGLVEQMGGPAIPAIGWAGGIERLAMLLDSVPELPAGIALVPMGDEAVLKAASIARVLRSAGLRAEIETRGNMKKRMERVVKSGASHAIVLGDEEIAKNIVQLRDLSSREQQEVPVADLARILSAGRA.

This sequence belongs to the class-II aminoacyl-tRNA synthetase family. Homodimer.

It is found in the cytoplasm. The enzyme catalyses tRNA(His) + L-histidine + ATP = L-histidyl-tRNA(His) + AMP + diphosphate + H(+). This Gluconobacter oxydans (strain 621H) (Gluconobacter suboxydans) protein is Histidine--tRNA ligase.